Here is a 3183-residue protein sequence, read N- to C-terminus: MEAEDLSKTEDRPEDPGFQNEGQSPAVKPSFSLEGQSPGPSVLWDMLEQKFLDYQQLMPRNPEERRKNLLSLLPLFLKAWEHSVGIICFRSLQRLAEDVSDQLAQEIQQALAGKPAEQARAAAGQLLQWKSDADQDGNLLLKSVYVLTGTDSETLGRVVDSGLPALLLQCLYLFFAFPVEKDDLLESDVQGQRMFVQMLLNICSESQGLEGLLSGSELQSLLIATTCLREHSCLFWKQPTFCVLRAISKAQSPSVIQYLRTADCVRLSVQNLSKLADTLPAPEVSEAVSLILNFVRDSYPISSALLLEFENGEGYPLLLKVLLRYNGLTQGVVEPHLEELIELVMWLTTCGRSELKVFDSVTYPQLEGFKFHQEASGVTVKNLQAFQVLQNLFHRASDSVLCIQVLLAIKTMWAWNPRNFFLLEWTLQPISQFAEIIPLKPTPVQEHFFQLLETLVFKLLYVPHEVLAKVQRLIKESSELSCTLVALRSILRITASDRLFTDIFRDSGLLGLLLAQLRKQAKIMRKSGNKECSPDVQDPERELTYVMLSTVVTLLQGSVRNAVVLKDHGMVPFIKIFLDDECYRGPSLSILEQLSVINAEEYMSIIVGALCSSTQGELQLKLDLLKSLLRILETPKGHAAFRVSSGFNGLLSLLSDLEGSLQVPEVTTCGAVSPSQTLELVLHTLCVVSAALHLDPVNEHFFRSNGLFEKLAEDLCLLGCFGTPEEERTRWDSSSDMKARPFMDLLSCAFSSSCQFPPRLQSCLQILSFLESMASGTLHLRGDLMEPARAGQEPSVDAQKAEAGGRQGKFKQWPDMEDRMDEGDVMIMHPGIICIMVRLLPRLYLEDHPQLSEEIQCSVARHLLSLVKSEKNRQVMCEAGMLRTLMTFCPRTLSTGGSDLHSILIRIFEKLGSQAIEPDVLRQFLGLGIRPPRSAAVKSLHLPPGHEDNPGCSGSCAATAEKPTDSSPRPGGSQALRPSWASQYSATALQTTLSLISMTSPRNLQPQRAALTPSFVEFDMSSEGYGCLFTPTLSTVMGTSTEHSISGGTGSGAPRPFPPPGGLTFSCWFLISRQANVMEGHPLRFLTLVRHLARTEQPFVCFSISLCMDDLSLVVSTEEKEFQPLDAMEPEDEAEPSAGRQLQVRCSQLLTCGQWYHLAVVVSKEMKRNCSVTTYLDGQAIGSAKMLYIQALPGSFFSMDPSSFVDVYGYIGTPRVWKQKSSLTWRLGPAYLFEEDISADTLALIIKLGPRYCGNFQAVHLQGEDPDGEATPLIAEERVSFGLYVPSSSITSIMNIRNTYNEVDSRLIAKEMNISSRDNATPVFLLRNCAGHLSGPLRTLGAVAVGQLGVRVFHSSPAASSLDYIGGPAILLGLISLATDDHTMYAAMKVLHSVLTSNAMCDYLMQHICGYQILAFLLRKKTSFLNHRIFQLILSVAGTAELGFRPSAVTNMCIFQHVLCNFELWTNTADNLELTLFSHLLEILQSPREGPRNAEVAHQAQLLPKLLFLFNEPSLALSKVSTIIAILGCQLKGHFNIQDLLRVGLFVIYTLKPSSVNERQICLDGAQDPSRPAGSQTSGKAIWLRNQLLEMLFGVISSSQLHLTSELKEQVFLSLGPDWFLLLLQGHLHPSTTTLALKLLLYFLSSPPLRGRFRDGLSAGCWVENCMDGVDIVMDNLKSRPAVPDQSPCLLPGFRVLNDFLAYHVLIPEVYLIVSSFFLQTPLTELTNGPRENLDLMLQWLLQKHHQQEVLQAGLCIEGALLLLGMLKAIMNQPPAGSGDGAWEQTLPSSVLQFLRLVHRSYPQDSAWRTPDFLQTVAIITFPLETQKETTSESSRNTSSPGASAEASHAAEGFQASFQPHPALRQLREFMQVLLRELLLGGSNPKQWLPLEVILEASPDGATSQQKRDFQTEVLLSTMDIFQVPSGDGMPTLRGSKEPLPNAEAGAVPSLASVSYFTQKLVEKIYSGVFSADPRHILLFITEHIIAVIENPSSQKDTVMSALYSSLNKVILHCLSKPQQSLSECLGLLTILDFLQEHWDIIFATYNSNVSFLLCLMHCLLLLNARSYPEGFGLEPKPRITPYHQVFLSPNEEVKDKKEEGLPSLGDVQHSIQKSVRALWQQLVAQRRQTLEDAFKIDLSVKAGEIEVKIEEITPLWEETMLRAWQHYLASEKKSLASRSSVMHHSKVTSWSGSLSSAMRLMPGRQAKDPECRAEDFVSCIENYRRKGQELYASIYKDYVQRRKSGSIKAATAWARMREQLFGELGLWGQMTESTRCSRWELDGREGPARMRKRIRHLLAWEPLNLGYKESQEGKGDVSQTNTGNQVFMTADELTTEEAESRPDEVGVDCTQLTFFPALHESLHSEDFLELCRERQVILQELLDGEKVSQKVPMVIVQGHLVSEGILLFGQHHFYICENFTLSPTGDVYCTHHCLSNISDPFIFNMCSKDRSSDHYSCQRHAYSDLRELRQARFLLQDIALEIFFQNGYSKLLVFYNSDRSKALKSFSTFQPSLKGKGTTEDPFNLRKHPGFDRTMLQRWQKREISNFEYLMYLNTLAGRTYNDYMQYPVFPWVLADYTSEMLNLTNPKTFRDLSKPMGAQTKERKLKFTQRFKDVEKIEGDMTVQCHYYTHYSSAIIVASYLVRMPPFTQAFCSLQGGSFDVADRMFHSVKSTWESASKENMSDVRELTPEFFYLPEFLTNCNAVEFGCMQDGTTLGDVQLPPWADGDPRKFISLHRQALESDFVSSNLHHWIDLIFGYKQQGPAAVEAVNTFHPYFYGDRIDLGSITDPLIKSTILGFISNFGQVPKQIFTKPHPSRNTTGKNPGPGKDASTPVGLPGHSQSFLHSLPALRPSQVTVKDMYLFSLGSESPKGAIGHIVPTEKSILAVEKNKLLMPPLWNRTFSWGFDDFSCCLGSYGSDKILMTFENLAAWGPCLCAVCPSPTMIVTSGASAVVCIWELSLVKGRPRGLKLRQALYGHTQAVTCLTASVTFSLLVSGSQDRTCILWDLDHLSRVACLPVHREGISAIAISDVSGTIVSCAGAHLSLWNVNGQPLASITTAWGPEGTITCCCIVEGPAWDASHVIITGSKDGMVRIWKTEDVKMPVPRQAVMEEPSTEPLSPRGHKWAKNLALSRELDVSVALSGKPSKASPAVTALAITRNQSKLLVGDEKGRIFCWSADG.

Positions 1-15 are enriched in basic and acidic residues; that stretch reads MEAEDLSKTEDRPED. Disordered regions lie at residues 1–37, 790–811, 938–977, and 1828–1852; these read MEAE…EGQS, AGQE…GKFK, KSLH…QALR, and KETT…HAAE. A compositionally biased stretch (low complexity) spans 1832–1852; the sequence is SESSRNTSSPGASAEASHAAE. Positions 2383 to 2508 constitute a BEACH-type PH domain; it reads LDGEKVSQKV…DRSKALKSFS (126 aa). The BEACH domain maps to 2525 to 2819; it reads NLRKHPGFDR…QIFTKPHPSR (295 aa). The interval 2812 to 2836 is disordered; it reads FTKPHPSRNTTGKNPGPGKDASTPV. WD repeat units follow at residues 2930–2969, 2979–3018, 3021–3060, 3070–3108, and 3150–3183; these read LAAW…GRPR, GHTQ…RVAC, VHRE…ASIT, TCCC…MPVP, and KASP…SADG.

Interacts with HSP90AB1. In terms of tissue distribution, highly expressed in immune tissues, especially B lymphocytes.

It localises to the early endosome. The protein localises to the endoplasmic reticulum. Its function is as follows. Plays a critical role in the regulation of cDC1-mediated cross-presentation of viral and tumor antigens in dendritic cells. Mechanistically, acts near the plasma membrane and interacts with endosomal membranes to promote endosomal-to-cytosol antigen trafficking. Also plays a role in B-cell survival through regulation of autophagy. This chain is WD repeat- and FYVE domain-containing protein 4, found in Mus musculus (Mouse).